A 363-amino-acid chain; its full sequence is Early boundary activity protein 1 (363 aa).

A compositionally biased stretch (basic and acidic residues) spans 155 to 168; that stretch reads MDQEPEHKQSHEQD. The disordered stretch occupies residues 155–242; that stretch reads MDQEPEHKQS…NAKRRCPGFE (88 aa). Residues 198–209 show a composition bias toward acidic residues; sequence EDLGLDDDDEDY. The 100-residue stretch at 255 to 354 folds into the BEN domain; sequence GPNGTEVSRI…TKCADENKML (100 aa).

The heterotrimeric Elba complex consists of Elba1, Elba2 and Elba3.

It localises to the nucleus. The heterotrimeric Elba complex is required for chromatin domain boundary function during early embryogenesis. It binds to a 8-bp sequence 5'-CCAATAAG-3' in the Fab-7 insulator or boundary element in the bithorax complex and contributes to its insulator or boundary activity. Elba1 may act as a transcriptional repressor and binds the palindromic sequence 5'-CCAATTGG-3' to mediate transcriptional repression. The polypeptide is Early boundary activity protein 1 (Drosophila melanogaster (Fruit fly)).